The chain runs to 341 residues: Heat-inducible transcription repressor HrcA (341 aa).

Belongs to the HrcA family.

In terms of biological role, negative regulator of class I heat shock genes (grpE-dnaK-dnaJ and groELS operons). Prevents heat-shock induction of these operons. The chain is Heat-inducible transcription repressor HrcA from Corynebacterium glutamicum (strain ATCC 13032 / DSM 20300 / JCM 1318 / BCRC 11384 / CCUG 27702 / LMG 3730 / NBRC 12168 / NCIMB 10025 / NRRL B-2784 / 534).